A 447-amino-acid polypeptide reads, in one-letter code: Argininosuccinate synthase (447 aa).

Residues 17 to 25 and alanine 43 each bind ATP; that span reads AFSGGLDTS. Tyrosine 99 contributes to the L-citrulline binding site. ATP contacts are provided by glycine 129 and threonine 131. L-aspartate-binding residues include threonine 131, asparagine 135, and aspartate 136. L-citrulline is bound at residue asparagine 135. Position 136 (aspartate 136) interacts with ATP. Residues arginine 139 and serine 192 each contribute to the L-citrulline site. ATP is bound at residue aspartate 194. 3 residues coordinate L-citrulline: threonine 201, glutamate 203, and glutamate 280.

The protein belongs to the argininosuccinate synthase family. Type 2 subfamily. As to quaternary structure, homotetramer.

Its subcellular location is the cytoplasm. The enzyme catalyses L-citrulline + L-aspartate + ATP = 2-(N(omega)-L-arginino)succinate + AMP + diphosphate + H(+). It functions in the pathway amino-acid biosynthesis; L-arginine biosynthesis; L-arginine from L-ornithine and carbamoyl phosphate: step 2/3. This Escherichia coli O127:H6 (strain E2348/69 / EPEC) protein is Argininosuccinate synthase.